We begin with the raw amino-acid sequence, 358 residues long: Probable undecaprenyl-phosphate N-acetylglucosaminyl 1-phosphate transferase (358 aa).

The next 11 helical transmembrane spans lie at 10-32 (VVAF…RIAI), 53-72 (MGGL…SGIY), 76-93 (RMTA…LGIL), 105-127 (FLIQ…FFSV), 137-157 (GWMA…AINL), 164-181 (LAAG…VMAL), 186-205 (VLIL…FLFY), 218-235 (GSLF…LGLY), 240-262 (LFSI…FAII), 292-311 (MSVL…AIVL), and 316-338 (IWLS…EVTG).

Belongs to the glycosyltransferase 4 family. The cofactor is Mg(2+). Mn(2+) serves as cofactor.

It is found in the cell membrane. The enzyme catalyses di-trans,octa-cis-undecaprenyl phosphate + UDP-N-acetyl-alpha-D-glucosamine = N-acetyl-alpha-D-glucosaminyl-di-trans,octa-cis-undecaprenyl diphosphate + UMP. It participates in cell wall biogenesis; poly(glucopyranosyl N-acetylgalactosamine 1-phosphate) teichoic acid biosynthesis. Its pathway is cell wall biogenesis; poly(glycerol phosphate) teichoic acid biosynthesis. Catalyzes the formation of undecaprenyl-PP-N-acetylglucosamine. Involved in the synthesis of anionic cell-wall polymers as it mediates the initiation of the linkage unit formation that appears to be common to the two types of teichoic acids attached to the peptidoglycan of B.subtilis; may also be involved in teichuronic acid biosynthesis. This Bacillus subtilis (strain 168) protein is Probable undecaprenyl-phosphate N-acetylglucosaminyl 1-phosphate transferase (tagO).